Here is a 59-residue protein sequence, read N- to C-terminus: MTTELDPRLLSLLVCPVTKGPLTYDRETQELISPRAKLAFPIRDGIPIMLPEEARQIDA.

It belongs to the UPF0434 family.

This chain is UPF0434 protein GOX0764, found in Gluconobacter oxydans (strain 621H) (Gluconobacter suboxydans).